Reading from the N-terminus, the 121-residue chain is Large ribosomal subunit protein bL19 (121 aa).

It belongs to the bacterial ribosomal protein bL19 family.

In terms of biological role, this protein is located at the 30S-50S ribosomal subunit interface and may play a role in the structure and function of the aminoacyl-tRNA binding site. This Chlamydia pneumoniae (Chlamydophila pneumoniae) protein is Large ribosomal subunit protein bL19 (rplS).